Here is an 80-residue protein sequence, read N- to C-terminus: MAMDQKRLDRINELAHKAKAEGLTPEETMERQELRDAYLKDFRSSFRSQVEMLQVYDKEGKEVTPEKVKDIQREKGLRDD.

Residues 59-80 (EGKEVTPEKVKDIQREKGLRDD) are disordered.

The protein belongs to the UPF0291 family.

It is found in the cytoplasm. The sequence is that of UPF0291 protein LCA_1274 from Latilactobacillus sakei subsp. sakei (strain 23K) (Lactobacillus sakei subsp. sakei).